A 473-amino-acid chain; its full sequence is Aspartyl/glutamyl-tRNA(Asn/Gln) amidotransferase subunit B (473 aa).

Belongs to the GatB/GatE family. GatB subfamily. In terms of assembly, heterotrimer of A, B and C subunits.

The enzyme catalyses L-glutamyl-tRNA(Gln) + L-glutamine + ATP + H2O = L-glutaminyl-tRNA(Gln) + L-glutamate + ADP + phosphate + H(+). It carries out the reaction L-aspartyl-tRNA(Asn) + L-glutamine + ATP + H2O = L-asparaginyl-tRNA(Asn) + L-glutamate + ADP + phosphate + 2 H(+). In terms of biological role, allows the formation of correctly charged Asn-tRNA(Asn) or Gln-tRNA(Gln) through the transamidation of misacylated Asp-tRNA(Asn) or Glu-tRNA(Gln) in organisms which lack either or both of asparaginyl-tRNA or glutaminyl-tRNA synthetases. The reaction takes place in the presence of glutamine and ATP through an activated phospho-Asp-tRNA(Asn) or phospho-Glu-tRNA(Gln). This chain is Aspartyl/glutamyl-tRNA(Asn/Gln) amidotransferase subunit B, found in Finegoldia magna (strain ATCC 29328 / DSM 20472 / WAL 2508) (Peptostreptococcus magnus).